We begin with the raw amino-acid sequence, 451 residues long: UBP1-associated protein 2B (451 aa).

The tract at residues 1 to 86 (MTKKRKLESE…GNEDDDEEEP (86 aa)) is disordered. Composition is skewed to basic and acidic residues over residues 25–38 (CEKEDPEIRNVDNQ) and 49–63 (DTLKEMHEEEAKGED). Positions 67-77 (AETSSGSGNQG) are enriched in polar residues. 2 consecutive RRM domains span residues 128–236 (RKIF…NVSA) and 227–314 (RKIY…QHQH). Disordered regions lie at residues 302–335 (ANDGPKQVKQHQHNHNSHNQNSRYQRNDNNGYGA) and 423–451 (GGYQTQQPGQGGAGRGQHGAGYGGPYMGR). The segment covering 431–451 (GQGGAGRGQHGAGYGGPYMGR) has biased composition (gly residues).

Expressed in shoot meristem and flowers.

Its subcellular location is the nucleus. In terms of biological role, heterogeneous nuclear ribonucleoprotein (hnRNP)-like protein that acts as a component of a complex regulating the turnover of mRNAs in the nucleus. Binds with high affinity to RNA molecules that contain U-rich sequences in 3'-UTRs. May function in complex with UBP1 and contribute to the stabilization of mRNAs in the nucleus. This is UBP1-associated protein 2B (UBA2B) from Arabidopsis thaliana (Mouse-ear cress).